The primary structure comprises 463 residues: V-type proton ATPase subunit S1 (463 aa).

An N-terminal signal peptide occupies residues 1-32 (MMAATVVSRIRTGTGRAPVMWLSLSLVAVAAA). The propeptide occupies 33–225 (VATEQQVPLV…TAVRPSRVAR (193 aa)). The Lumenal portion of the chain corresponds to 33–412 (VATEQQVPLV…EQFSYASDCA (380 aa)). N-linked (GlcNAc...) asparagine glycans are attached at residues asparagine 164, asparagine 255, asparagine 267, asparagine 290, asparagine 297, asparagine 344, asparagine 351, and asparagine 399. Cysteine 365 and cysteine 411 form a disulfide bridge. A helical transmembrane segment spans residues 413-433 (GFFSPGIWMGLLTTLFMLFIF). The Cytoplasmic segment spans residues 434–463 (TYGLHMILSLKTMDRFDDHKGPTITLTQIV).

It belongs to the vacuolar ATPase subunit S1 family. As to quaternary structure, accessory component of the multisubunit proton-transporting vacuolar (V)-ATPase protein pump. Interacts (via N-terminus) with ATP6AP2 (via N-terminus). Interacts with RNASEK. Interacts with TMEM106B (via C-terminus). N-glycosylated. As to expression, expressed in brain cortex (at protein level). Highly expressed in islets of Langerhans. Expressed in pancreatic acini, pituitary gland, adrenal gland, lung, brain and bone marrow.

The protein localises to the endoplasmic reticulum membrane. The protein resides in the endoplasmic reticulum-Golgi intermediate compartment membrane. It is found in the cytoplasmic vesicle. Its subcellular location is the secretory vesicle. It localises to the synaptic vesicle membrane. The protein localises to the clathrin-coated vesicle membrane. Accessory subunit of the proton-transporting vacuolar (V)-ATPase protein pump, which is required for luminal acidification of secretory vesicles. Guides the V-type ATPase into specialized subcellular compartments, such as neuroendocrine regulated secretory vesicles or the ruffled border of the osteoclast, thereby regulating its activity. Involved in membrane trafficking and Ca(2+)-dependent membrane fusion. May play a role in the assembly of the V-type ATPase complex. In aerobic conditions, involved in intracellular iron homeostasis, thus triggering the activity of Fe(2+) prolyl hydroxylase (PHD) enzymes, and leading to HIF1A hydroxylation and subsequent proteasomal degradation. In islets of Langerhans cells, may regulate the acidification of dense-core secretory granules. This Mus musculus (Mouse) protein is V-type proton ATPase subunit S1 (Atp6ap1).